Consider the following 565-residue polypeptide: Glycine--tRNA ligase (565 aa).

Positions 98 and 164 each coordinate substrate. Residues 196–198, 206–211, 323–324, and 440–443 each bind ATP; these read RNE, IRLREF, EI, and GIDR. 211–215 is a substrate binding site; that stretch reads FTQAE. Position 436 to 440 (436 to 440) interacts with substrate; sequence EPSFG.

This sequence belongs to the class-II aminoacyl-tRNA synthetase family.

It is found in the cytoplasm. It catalyses the reaction tRNA(Gly) + glycine + ATP = glycyl-tRNA(Gly) + AMP + diphosphate. In terms of biological role, catalyzes the attachment of glycine to tRNA(Gly). The protein is Glycine--tRNA ligase of Methanothermobacter thermautotrophicus (strain ATCC 29096 / DSM 1053 / JCM 10044 / NBRC 100330 / Delta H) (Methanobacterium thermoautotrophicum).